Here is a 343-residue protein sequence, read N- to C-terminus: Arginine-hydroxylase NDUFAF5, mitochondrial (343 aa).

The transit peptide at 1 to 29 (MLRKVVLLRLCPLLGRPAVSASSGSRREV) directs the protein to the mitochondrion.

The protein belongs to the methyltransferase superfamily. As to quaternary structure, interacts with NDUFAF8, leading to stabilize NDUFAF5. Interacts with NDUFS7. Interacts with PYURF (via TRM112 domain); the interaction is direct and stabilizes NDUFAF5 protein.

The protein localises to the mitochondrion inner membrane. Arginine hydroxylase that mediates hydroxylation of 'Arg-122' of NDUFS7 and is involved in the assembly of mitochondrial NADH:ubiquinone oxidoreductase complex (complex I, MT-ND1) at early stages. May also have methyltransferase activity. In Mus musculus (Mouse), this protein is Arginine-hydroxylase NDUFAF5, mitochondrial.